A 168-amino-acid chain; its full sequence is Dihydrofolate reductase (168 aa).

Positions 1–164 (MIIGIWAEDE…YTFTIKKYEK (164 aa)) constitute a DHFR domain. Residue 5–7 (IWA) coordinates substrate. Residues 6–7 (WA) and 14–19 (IGEADK) contribute to the NADP(+) site. Glutamate 27 lines the substrate pocket. 43-46 (GRKT) is an NADP(+) binding site. Arginine 58 serves as a coordination point for substrate. Residues 63-66 (LTRD) and 99-104 (TGGAEI) contribute to the NADP(+) site. Threonine 118 serves as a coordination point for substrate.

The protein belongs to the dihydrofolate reductase family.

It catalyses the reaction (6S)-5,6,7,8-tetrahydrofolate + NADP(+) = 7,8-dihydrofolate + NADPH + H(+). Its pathway is cofactor biosynthesis; tetrahydrofolate biosynthesis; 5,6,7,8-tetrahydrofolate from 7,8-dihydrofolate: step 1/1. In terms of biological role, key enzyme in folate metabolism. Catalyzes an essential reaction for de novo glycine and purine synthesis, and for DNA precursor synthesis. The polypeptide is Dihydrofolate reductase (folA) (Lactococcus lactis subsp. lactis (strain IL1403) (Streptococcus lactis)).